Consider the following 143-residue polypeptide: Large ribosomal subunit protein uL11 (143 aa).

Belongs to the universal ribosomal protein uL11 family. As to quaternary structure, part of the ribosomal stalk of the 50S ribosomal subunit. Interacts with L10 and the large rRNA to form the base of the stalk. L10 forms an elongated spine to which L12 dimers bind in a sequential fashion forming a multimeric L10(L12)X complex. Post-translationally, one or more lysine residues are methylated.

Forms part of the ribosomal stalk which helps the ribosome interact with GTP-bound translation factors. In Teredinibacter turnerae (strain ATCC 39867 / T7901), this protein is Large ribosomal subunit protein uL11.